The chain runs to 348 residues: Ion-translocating oxidoreductase complex subunit D (348 aa).

Helical transmembrane passes span 15–35 (LTAK…GMQA), 36–56 (YFFG…AVAI), 67–87 (LTAF…LAIS), 88–108 (IPPY…LLLA), and 125–145 (VAYA…LVPI). Position 186 is an FMN phosphoryl threonine (T186). A run of 5 helical transmembrane segments spans residues 212 to 232 (LFAN…LLLI), 241 to 261 (IPAA…LLLP), 265 to 285 (LNVV…FIAT), 298 to 318 (LIFG…GNYP), and 320 to 340 (AVAF…HYTQ).

Belongs to the NqrB/RnfD family. As to quaternary structure, the complex is composed of six subunits: RnfA, RnfB, RnfC, RnfD, RnfE and RnfG. Requires FMN as cofactor.

The protein resides in the cell inner membrane. Functionally, part of a membrane-bound complex that couples electron transfer with translocation of ions across the membrane. The protein is Ion-translocating oxidoreductase complex subunit D of Actinobacillus pleuropneumoniae serotype 3 (strain JL03).